A 400-amino-acid polypeptide reads, in one-letter code: Plasminogen activator inhibitor 1 (400 aa).

Residues 1–21 (MQMSTVCLALGLALVFGEASA) form the signal peptide. Residues N230, N286, and N350 are each glycosylated (N-linked (GlcNAc...) asparagine).

Belongs to the serpin family. As to quaternary structure, forms a heterodimer with TMPRSS7. Interacts with VTN. Binds LRP1B; binding is followed by internalization and degradation. Interacts with PPP1CB. In complex with PLAU/uPA, interacts with PLAUR/uPAR. Interacts with SORL1 and LRP1, either alone or in complex with PLAU; these interactions are abolished in the presence of LRPAP1/RAP. The ternary complex composed of PLAUR-PLAU-PAI1 also interacts with SORL1. Interacts with PLAT/tPA. Also interacts with SORL1, when complexed to PLAT/tPA.

It localises to the secreted. In terms of biological role, serine protease inhibitor. Inhibits TMPRSS7. Is a primary inhibitor of tissue-type plasminogen activator (PLAT) and urokinase-type plasminogen activator (PLAU). As PLAT inhibitor, it is required for fibrinolysis down-regulation and is responsible for the controlled degradation of blood clots. As PLAU inhibitor, it is involved in the regulation of cell adhesion and spreading. Acts as a regulator of cell migration, independently of its role as protease inhibitor. It is required for stimulation of keratinocyte migration during cutaneous injury repair. It is involved in cellular and replicative senescence. Plays a role in alveolar type 2 cells senescence in the lung. Is involved in the regulation of cementogenic differentiation of periodontal ligament stem cells, and regulates odontoblast differentiation and dentin formation during odontogenesis. The sequence is that of Plasminogen activator inhibitor 1 (SERPINE1) from Neovison vison (American mink).